The sequence spans 234 residues: Iron-sulfur cluster co-chaperone protein HscB (234 aa).

The a divalent metal cation site is built by C40, C43, C57, and C60. The J domain occupies 71 to 143; it reads DYFSLMNCNR…LTRGLYLLKL (73 aa).

Belongs to the HscB family. Interacts with ISCU and HSPA9 to form an iron-sulfur transfer complex. Interacts with SDHAF1 (via the first LYR motif); the interaction recruits the iron-sulfur transfer complex composed of HSC20, HSPA9 and ISCU and mediates the incorporation of iron-sulfur clusters into SDHB which also interacts with HSC20. Interacts with the cytoplasmic form of ISCU and with CIA complex member CIAO1 (via LYR motif). In terms of assembly, homodimer. Interacts with ISCU (cytoplasmic form); this interaction stabilizes the (Fe-S) clusters on ISCU. Interacts with the CIA complex member CIAO1 (via LYR motif).

It localises to the cytoplasm. The protein resides in the mitochondrion. Its pathway is cofactor biosynthesis; iron-sulfur cluster biosynthesis. Acts as a co-chaperone in iron-sulfur cluster assembly in mitochondria. Required for incorporation of iron-sulfur clusters into SDHB, the iron-sulfur protein subunit of succinate dehydrogenase that is involved in complex II of the mitochondrial electron transport chain. Recruited to SDHB by interaction with SDHAF1 which first binds SDHB and then recruits the iron-sulfur transfer complex formed by HSC20, HSPA9 and ISCU through direct binding to HSC20. Plays an essential role in hematopoiesis. Its function is as follows. Acts as a co-chaperone in iron-sulfur cluster assembly in the cytoplasm. Also mediates complex formation between components of the cytosolic iron-sulfur biogenesis pathway and the CIA targeting complex composed of CIAO1, DIPK1B/FAM69B and MMS19 by binding directly to the scaffold protein ISCU and to CIAO1. This facilitates iron-sulfur cluster insertion into a number of cytoplasmic and nuclear proteins including POLD1, ELP3, DPYD and PPAT. This is Iron-sulfur cluster co-chaperone protein HscB from Mus musculus (Mouse).